Consider the following 427-residue polypeptide: UDP-N-acetylglucosamine--N-acetylmuramyl-(pentapeptide) pyrophosphoryl-undecaprenol N-acetylglucosamine transferase (427 aa).

Residues T29 to G31, N141, R177, S205, I258, and Q303 each bind UDP-N-acetyl-alpha-D-glucosamine. The disordered stretch occupies residues S408 to Q427.

This sequence belongs to the glycosyltransferase 28 family. MurG subfamily.

It localises to the cell inner membrane. The enzyme catalyses di-trans,octa-cis-undecaprenyl diphospho-N-acetyl-alpha-D-muramoyl-L-alanyl-D-glutamyl-meso-2,6-diaminopimeloyl-D-alanyl-D-alanine + UDP-N-acetyl-alpha-D-glucosamine = di-trans,octa-cis-undecaprenyl diphospho-[N-acetyl-alpha-D-glucosaminyl-(1-&gt;4)]-N-acetyl-alpha-D-muramoyl-L-alanyl-D-glutamyl-meso-2,6-diaminopimeloyl-D-alanyl-D-alanine + UDP + H(+). It participates in cell wall biogenesis; peptidoglycan biosynthesis. Cell wall formation. Catalyzes the transfer of a GlcNAc subunit on undecaprenyl-pyrophosphoryl-MurNAc-pentapeptide (lipid intermediate I) to form undecaprenyl-pyrophosphoryl-MurNAc-(pentapeptide)GlcNAc (lipid intermediate II). This Xanthomonas campestris pv. campestris (strain B100) protein is UDP-N-acetylglucosamine--N-acetylmuramyl-(pentapeptide) pyrophosphoryl-undecaprenol N-acetylglucosamine transferase.